Consider the following 569-residue polypeptide: Protein Noxp20 (569 aa).

Disordered regions lie at residues 1 to 87 (MSDD…GEVT), 102 to 126 (GDTG…QAGR), and 165 to 208 (ANSA…GSRG). T197 is modified (phosphothreonine). S262 carries the post-translational modification Phosphoserine. Positions 404–439 (VSIDVAKGSEEEEKEEGKEEKAEEPEEDKTGGQGAK) are disordered.

The protein belongs to the FAM114 family. Over-expressed in brain. Also detected in lung, stomach, and in a lower extent in testis and thymus.

Its subcellular location is the cytoplasm. Its function is as follows. May play a role in neuronal cell development. The sequence is that of Protein Noxp20 (Fam114a1) from Mus musculus (Mouse).